Reading from the N-terminus, the 324-residue chain is Probable 6-phosphogluconolactonase 4, chloroplastic (324 aa).

A chloroplast-targeting transit peptide spans 1–63 (MSVSAAVAAA…PAMATDGAAA (63 aa)). Positions 19–43 (ARHRSPPASRVAATSRGRPFSSGPH) are disordered.

It belongs to the glucosamine/galactosamine-6-phosphate isomerase family. 6-phosphogluconolactonase subfamily.

The protein localises to the plastid. It is found in the chloroplast. The catalysed reaction is 6-phospho-D-glucono-1,5-lactone + H2O = 6-phospho-D-gluconate + H(+). It participates in carbohydrate degradation; pentose phosphate pathway; D-ribulose 5-phosphate from D-glucose 6-phosphate (oxidative stage): step 2/3. Its function is as follows. Hydrolysis of 6-phosphogluconolactone to 6-phosphogluconate. This Oryza sativa subsp. japonica (Rice) protein is Probable 6-phosphogluconolactonase 4, chloroplastic.